Consider the following 1242-residue polypeptide: DNA-directed RNA polymerase RPB2 homolog (1242 aa).

A C4-type zinc finger spans residues 1180-1201; it reads CRNCGEPAIYNASHPIYKCMNC.

This sequence belongs to the RNA polymerase beta chain family. In terms of assembly, part of the viral DNA-directed RNA polymerase that consists of 8 polII-like subunits (RPB1, RPB2, RPB3, RPB5, RPB6, RPB7, RPB9, RPB10), a capping enzyme and a termination factor.

The protein localises to the host cytoplasm. It localises to the virion. The enzyme catalyses RNA(n) + a ribonucleoside 5'-triphosphate = RNA(n+1) + diphosphate. Catalytic component of the DNA-directed RNA polymerase (RNAP) that catalyzes the transcription in the cytoplasm of viral DNA into RNA using the four ribonucleoside triphosphates as substrates. Forms the polymerase active center together with RPB1. Part of the core element with the central large cleft, the clamp element that moves to open and close the cleft and the jaws that are thought to grab the incoming DNA template. This is DNA-directed RNA polymerase RPB2 homolog from African swine fever virus (isolate Tick/Malawi/Lil 20-1/1983) (ASFV).